The primary structure comprises 637 residues: Biosynthetic arginine decarboxylase (637 aa).

N6-(pyridoxal phosphate)lysine is present on lysine 101. 286-296 is a binding site for substrate; the sequence is FDVGGGLAVDY.

This sequence belongs to the Orn/Lys/Arg decarboxylase class-II family. SpeA subfamily. Mg(2+) serves as cofactor. Pyridoxal 5'-phosphate is required as a cofactor.

The catalysed reaction is L-arginine + H(+) = agmatine + CO2. The protein operates within amine and polyamine biosynthesis; agmatine biosynthesis; agmatine from L-arginine: step 1/1. Catalyzes the biosynthesis of agmatine from arginine. This Shewanella loihica (strain ATCC BAA-1088 / PV-4) protein is Biosynthetic arginine decarboxylase.